A 193-amino-acid chain; its full sequence is Molybdopterin synthase catalytic subunit (193 aa).

Substrate-binding positions include 118-119 (HR), lysine 134, and 141-143 (KKE). A disordered region spans residues 159–193 (DRTTTDGTTASSPAPATRPAKGGGCCGRKVRVNES). Low complexity predominate over residues 163–178 (TDGTTASSPAPATRPA).

It belongs to the MoaE family. MOCS2B subfamily. In terms of assembly, heterotetramer; composed of 2 small (MOCS2A) and 2 large (MOCS2B) subunits.

It is found in the cytoplasm. The enzyme catalyses 2 [molybdopterin-synthase sulfur-carrier protein]-C-terminal-Gly-aminoethanethioate + cyclic pyranopterin phosphate + H2O = molybdopterin + 2 [molybdopterin-synthase sulfur-carrier protein]-C-terminal Gly-Gly + 2 H(+). It functions in the pathway cofactor biosynthesis; molybdopterin biosynthesis. In terms of biological role, catalytic subunit of the molybdopterin synthase complex, a complex that catalyzes the conversion of precursor Z into molybdopterin. Acts by mediating the incorporation of 2 sulfur atoms from thiocarboxylated MOCS2A into precursor Z to generate a dithiolene group. The polypeptide is Molybdopterin synthase catalytic subunit (Oryza sativa subsp. japonica (Rice)).